The chain runs to 1821 residues: PH-interacting protein (1821 aa).

Ser-136 carries the post-translational modification Phosphoserine. WD repeat units lie at residues Gly-181–Arg-222, His-224–Val-262, Gly-265–Arg-310, Arg-319–Glu-360, and Phe-363–Ile-402. Lys-421 participates in a covalent cross-link: Glycyl lysine isopeptide (Lys-Gly) (interchain with G-Cter in SUMO2). WD repeat units lie at residues Ile-422–Val-461, Gly-464–Ser-504, and Gln-512–Lys-551. Residues Ser-641, Ser-659, Ser-674, Ser-677, Ser-683, and Ser-692 each carry the phosphoserine modification. Disordered stretches follow at residues Glu-653–Ile-695 and Asp-782–Val-927. A compositionally biased stretch (polar residues) spans Ser-665–Val-681. Residues Ser-800–Glu-810 are compositionally biased toward basic and acidic residues. The segment covering Ser-841–Asp-854 has biased composition (low complexity). Phosphoserine is present on residues Ser-879, Ser-880, Ser-881, and Ser-911. Basic residues predominate over residues Pro-912 to Arg-924. Residues Arg-924–Phe-1129 are mediates interaction with IRS1. In terms of domain architecture, Bromo 1 spans Trp-1156–Gln-1263. A phosphoserine mark is found at Ser-1281, Ser-1283, and Ser-1296. Residues Asp-1282 to Arg-1310 form a disordered region. Basic residues predominate over residues Thr-1297 to Arg-1310. At Ser-1315 the chain carries Phosphoserine. One can recognise a Bromo 2 domain in the interval Tyr-1316 to Val-1421. Thr-1359 is modified (phosphothreonine). The residue at position 1405 (Ser-1405) is a Phosphoserine. Residues Asn-1435 to Arg-1446 show a composition bias toward basic residues. The tract at residues Asn-1435 to Arg-1507 is disordered. Low complexity predominate over residues Ser-1447–Ser-1457. Lys-1470 is covalently cross-linked (Glycyl lysine isopeptide (Lys-Gly) (interchain with G-Cter in SUMO1); alternate). Residue Lys-1470 forms a Glycyl lysine isopeptide (Lys-Gly) (interchain with G-Cter in SUMO2); alternate linkage. A compositionally biased stretch (polar residues) spans Ser-1471–Thr-1482. Ser-1479 carries the post-translational modification Phosphoserine. The residue at position 1497 (Lys-1497) is an N6-acetyllysine. Position 1525 is a phosphoserine (Ser-1525). Lys-1533 is modified (N6-acetyllysine). Positions Ser-1556–Lys-1576 are enriched in polar residues. Disordered regions lie at residues Ser-1556–Lys-1596, Gln-1623–Gln-1676, and Arg-1740–Glu-1785. Phosphoserine is present on Ser-1560. Lys-1644 participates in a covalent cross-link: Glycyl lysine isopeptide (Lys-Gly) (interchain with G-Cter in SUMO2). Phosphoserine is present on Ser-1651. Residue Lys-1670 forms a Glycyl lysine isopeptide (Lys-Gly) (interchain with G-Cter in SUMO2) linkage. Residues Ser-1762 and Ser-1783 each carry the phosphoserine modification.

Interacts (via bromo domain) with acetylated lysine residues on histone H1.4, histone H3 and H4 (in vitro). Interacts with IRS1 and IRS2. In terms of tissue distribution, widely expressed with most abundant expression detected in pancreatic islets, brain and skeletal muscle. Predominantly expressed in developing and regenerating neurons. Expressed in adult brain (granular layer of the olfactorium bulb, hippocampus, dentate gyrus and cerebellum internal granular layer). Expressed in the CA3 region of adult hippocampus, adult and fetal retina, perinatal dorsal root ganglion and embryonal olfactory epithelia (at protein level).

It is found in the nucleus. Its function is as follows. Probable regulator of the insulin and insulin-like growth factor signaling pathways. Stimulates cell proliferation through regulation of cyclin transcription and has an anti-apoptotic activity through AKT1 phosphorylation and activation. Plays a role in the regulation of cell morphology and cytoskeletal organization. This Mus musculus (Mouse) protein is PH-interacting protein (Phip).